Consider the following 251-residue polypeptide: uncharacterized protein (251 aa).

This is an uncharacterized protein from Mycoplasma pneumoniae (strain ATCC 29342 / M129 / Subtype 1) (Mycoplasmoides pneumoniae).